The primary structure comprises 629 residues: tRNA uridine 5-carboxymethylaminomethyl modification enzyme MnmG (629 aa).

FAD is bound by residues 13–18, Val125, and Ser180; that span reads GGGHAG. 273–287 contacts NAD(+); that stretch reads GPRYCPSIEDKVMRF. Residue Gln370 coordinates FAD.

The protein belongs to the MnmG family. In terms of assembly, homodimer. Heterotetramer of two MnmE and two MnmG subunits. FAD serves as cofactor.

It is found in the cytoplasm. Its function is as follows. NAD-binding protein involved in the addition of a carboxymethylaminomethyl (cmnm) group at the wobble position (U34) of certain tRNAs, forming tRNA-cmnm(5)s(2)U34. The sequence is that of tRNA uridine 5-carboxymethylaminomethyl modification enzyme MnmG from Sodalis glossinidius (strain morsitans).